Here is a 128-residue protein sequence, read N- to C-terminus: Gastrotropin (128 aa).

Ala2 is subject to N-acetylalanine.

The protein belongs to the calycin superfamily. Fatty-acid binding protein (FABP) family. In terms of tissue distribution, found exclusively in the ileum and to a lesser extent in distal jejunum.

It is found in the cytoplasm. The protein resides in the membrane. In terms of biological role, binds to bile acids and is involved in enterohepatic bile acid metabolism. Required for efficient apical to basolateral transport of conjugated bile acids in ileal enterocytes. Stimulates gastric acid and pepsinogen secretion. This Sus scrofa (Pig) protein is Gastrotropin (FABP6).